The sequence spans 356 residues: D-alanine--D-alanine ligase (356 aa).

One can recognise an ATP-grasp domain in the interval 134–339; that stretch reads KQLFEHRGLP…YPELITKLIE (206 aa). 167-222 is an ATP binding site; it reads NDKLNYPVFVKPANLGSSIGISKCSNEVELKEGIKEAFQFDRKLVIEQGVNAREIE. Mg(2+) is bound by residues Asp293, Glu306, and Asn308.

Belongs to the D-alanine--D-alanine ligase family. Requires Mg(2+) as cofactor. The cofactor is Mn(2+).

It localises to the cytoplasm. The enzyme catalyses 2 D-alanine + ATP = D-alanyl-D-alanine + ADP + phosphate + H(+). The protein operates within cell wall biogenesis; peptidoglycan biosynthesis. Cell wall formation. In Staphylococcus aureus (strain MRSA252), this protein is D-alanine--D-alanine ligase.